Consider the following 1014-residue polypeptide: Disease resistance protein RGA4 (1014 aa).

A structured coiled coil (CC) domain region spans residues 1–182; that stretch reads MEAALLSGFI…PRIHEADLVG (182 aa). The stretch at 105-145 forms a coiled coil; the sequence is RTVRATKKLLQTNQHLAQELQRLKRMVEEANQRKQRYTAAA. The NB-ARC domain occupies 189 to 466; that stretch reads ELLEQLAERQ…WLAEGFVEPV (278 aa). LRR repeat units follow at residues 484 to 506, 507 to 530, 531 to 552, 580 to 602, 603 to 624, 625 to 647, 701 to 725, 762 to 784, 785 to 807, 808 to 833, and 854 to 877; these read RNIIEPINVSNNDKVKTCQTYGM, MREFISHMSISQNFVTFFCDDKFL, PKYVRRLSLHGDTVVNGDNFNG, LRVLDLEKCDDLNDDHLKEICNL, VLLKYLSLGGNISKLPKDIAKL, KDLEALDVRRSKVKIMPVEVFGL, MNKLRKLKIWCTSSAGSTDWTDLRE, PCYLSSLKLHGNFPQLPQFVTSL, RGLKELCLSSTKFTTGLLEALSN, LSYLQYLKLVADELEKFIIKVQGFPR, and LPFLVTLQLLCKDLHGLSDIKIEC.

The protein belongs to the disease resistance NB-LRR family. As to expression, expressed in leaves.

Its function is as follows. Probable disease resistance protein. Resistance proteins guard the plant against pathogens that contain an appropriate avirulence protein via an indirect interaction with this avirulence protein. That triggers a defense system including the hypersensitive response, which restricts the pathogen growth. At the opposite of cultivars Aichi asahi and Sasanishiki, the cultivars Nipponbare, Mokoto and Hitomebore don't recognize the effector avirulence protein AVR-Pia from M.oryzae. The chain is Disease resistance protein RGA4 from Oryza sativa subsp. japonica (Rice).